Reading from the N-terminus, the 332-residue chain is Eukaryotic translation initiation factor 3 subunit H (332 aa).

Residues 18–153 form the MPN domain; it reads VQVDGLTVLK…LKAFRLSDEM (136 aa). Positions 251 to 285 are disordered; it reads QQQKENYLQRRQQENQSRIQRGEDPLPDEDLSKMF.

Belongs to the eIF-3 subunit H family. As to quaternary structure, component of the eukaryotic translation initiation factor 3 (eIF-3) complex.

It localises to the cytoplasm. In terms of biological role, component of the eukaryotic translation initiation factor 3 (eIF-3) complex, which is involved in protein synthesis of a specialized repertoire of mRNAs and, together with other initiation factors, stimulates binding of mRNA and methionyl-tRNAi to the 40S ribosome. The eIF-3 complex specifically targets and initiates translation of a subset of mRNAs involved in cell proliferation. The chain is Eukaryotic translation initiation factor 3 subunit H from Nematostella vectensis (Starlet sea anemone).